A 295-amino-acid polypeptide reads, in one-letter code: Probable palmitoyltransferase ZDHHC24 (295 aa).

Over 1–20 (MTSFMSRVWCKVESTGRQLP) the chain is Cytoplasmic. The chain crosses the membrane as a helical span at residues 21–41 (IVLNAVLVFSITAEVSYLVLV). Over 42 to 60 (EAPFEPEQKKTDWSTIWTG) the chain is Extracellular. Residues 61–81 (LHLFAQYFMLGNITWNASLFV) form a helical membrane-spanning segment. Residues 82-151 (KTNPSIRGVF…HNYRYFLTCL (70 aa)) lie on the Cytoplasmic side of the membrane. Positions 102 to 152 (RYCYNCETHTPPRCSHCYDCNVCVLRRDHHCVFFGQCVGFHNYRYFLTCLL) constitute a DHHC domain. Cys132 acts as the S-palmitoyl cysteine intermediate in catalysis. A helical membrane pass occupies residues 152-172 (LFMWAGLLYAVVMNAEVFIFI). Residues 173–176 (LKEG) lie on the Extracellular side of the membrane. The chain crosses the membrane as a helical span at residues 177–197 (VTFHSVMLLLVPWIMLVSGQV). The Cytoplasmic portion of the chain corresponds to 198 to 203 (TTRAFA). Residues 204–224 (FAFIADTCVVGFLLVAAFLFF) form a helical membrane-spanning segment. The Extracellular portion of the chain corresponds to 225–295 (HVALMLRGQT…SLEPKKQAVH (71 aa)).

It belongs to the DHHC palmitoyltransferase family.

It localises to the membrane. The catalysed reaction is L-cysteinyl-[protein] + hexadecanoyl-CoA = S-hexadecanoyl-L-cysteinyl-[protein] + CoA. Its function is as follows. Probable palmitoyltransferase that could catalyze the addition of palmitate onto various protein substrates. The sequence is that of Probable palmitoyltransferase ZDHHC24 from Danio rerio (Zebrafish).